Here is a 199-residue protein sequence, read N- to C-terminus: Probable GTP-binding protein EngB (199 aa).

The EngB-type G domain occupies 28–199; it reads DLPEIALAGR…DSWDAILEQV (172 aa). GTP contacts are provided by residues 36-43, 63-67, 81-84, 148-151, and 180-182; these read GRSNVGKS, GKTQL, DVPG, TKAD, and FSS. Mg(2+) is bound by residues Ser-43 and Thr-65.

It belongs to the TRAFAC class TrmE-Era-EngA-EngB-Septin-like GTPase superfamily. EngB GTPase family. The cofactor is Mg(2+).

Necessary for normal cell division and for the maintenance of normal septation. The protein is Probable GTP-binding protein EngB of Streptococcus pyogenes serotype M3 (strain SSI-1).